Reading from the N-terminus, the 64-residue chain is Conotoxin reg3k (64 aa).

The first 20 residues, Met1–Ala20, serve as a signal peptide directing secretion. A propeptide spanning residues Leu21–Arg48 is cleaved from the precursor. Cystine bridges form between Cys50–Cys60, Cys51–Cys58, and Cys56–Cys61. At Pro59 the chain carries 4-hydroxyproline.

As to expression, expressed by the venom duct.

The protein localises to the secreted. The sequence is that of Conotoxin reg3k from Conus regius (Crown cone).